A 384-amino-acid polypeptide reads, in one-letter code: AIAAVTTFLILFTVFGNALVILAVLTSRSLRAPQNLFLVSLAAADILVATLIXPFSLANELLGYWYFWHTWCEVYLALXVLXCTSSIVHLCAISLDRYWAVSRALEYNSKRTPRRIXGIILTVWLIAAAISLPPLIYKGDQGPQPHGRPQCRLNQEAWYILSSSIGSFFAPCLIMILVYLRIYLIAKRRNRRGPRAQGASKGGASKQPHPLAGGASTKPPTLTSSLAVAGEVNGHSKPTGQEGKTPEDLGVVTLPPNWPALPNSGQGQKEGVCGISPEXAEEEEEGGPEALPASPASXGSPQLQQPQGTRVLVTLRGQVVLSRGLGAASGQWWRRRTQLTREKRFTFVLAVVIGVXVLCWFPFFXSYSLGAICPQHCTVXHGLF.

The helical transmembrane segment at 1–25 threads the bilayer; it reads AIAAVTTFLILFTVFGNALVILAVL. Residues 26 to 36 are Cytoplasmic-facing; that stretch reads TSRSLRAPQNL. A helical transmembrane segment spans residues 37 to 62; it reads FLVSLAAADILVATLIXPFSLANELL. At 63–72 the chain is on the extracellular side; sequence GYWYFWHTWC. The cysteines at positions 72 and 151 are disulfide-linked. A helical membrane pass occupies residues 73–95; that stretch reads EVYLALXVLXCTSSIVHLCAISL. The Cytoplasmic segment spans residues 96–117; it reads DRYWAVSRALEYNSKRTPRRIX. A helical membrane pass occupies residues 118–140; it reads GIILTVWLIAAAISLPPLIYKGD. At 141–156 the chain is on the extracellular side; sequence QGPQPHGRPQCRLNQE. A helical membrane pass occupies residues 157–180; that stretch reads AWYILSSSIGSFFAPCLIMILVYL. The Cytoplasmic portion of the chain corresponds to 181–348; the sequence is RIYLIAKRRN…LTREKRFTFV (168 aa). Residues 193-306 are disordered; that stretch reads GPRAQGASKG…SXGSPQLQQP (114 aa). The segment covering 288-306 has biased composition (low complexity); that stretch reads PEALPASPASXGSPQLQQP. The chain crosses the membrane as a helical span at residues 349 to 372; sequence LAVVIGVXVLCWFPFFXSYSLGAI. The Extracellular segment spans residues 373–381; the sequence is CPQHCTVXH. The helical transmembrane segment at 382-384 threads the bilayer; it reads GLF.

It belongs to the G-protein coupled receptor 1 family. Adrenergic receptor subfamily. ADRA2B sub-subfamily. In terms of assembly, interacts with RAB26. Interacts with PPP1R9B. Interacts with GGA1, GGA2 and GGA3.

It is found in the cell membrane. Alpha-2 adrenergic receptors mediate the catecholamine-induced inhibition of adenylate cyclase through the action of G proteins. This chain is Alpha-2B adrenergic receptor (ADRA2B), found in Echinops telfairi (Lesser hedgehog tenrec).